A 246-amino-acid polypeptide reads, in one-letter code: Transmembrane protein 41 homolog (246 aa).

6 helical membrane passes run 12-32 (WLVL…YSNF), 68-88 (SVVL…AIPG), 101-123 (PFYV…CYTI), 159-179 (IFLR…SPVL), 182-202 (PLAP…FLYI), and 219-239 (SWSS…PILL).

This sequence belongs to the TMEM41 family.

It localises to the membrane. This chain is Transmembrane protein 41 homolog (tag-175), found in Caenorhabditis elegans.